A 376-amino-acid polypeptide reads, in one-letter code: Serpin B9 (376 aa).

Position 1 is an N-acetylmethionine (M1).

It belongs to the serpin family. Ov-serpin subfamily.

The protein resides in the cytoplasm. Functionally, granzyme B inhibitor. The protein is Serpin B9 (SERPINB9) of Homo sapiens (Human).